Consider the following 444-residue polypeptide: Protein kinase C and casein kinase substrate in neurons protein 1 (444 aa).

Phosphoserine is present on residues Ser2 and Ser79. The region spanning 13–283 (EETTDSFWEV…AIRGADAQED (271 aa)) is the F-BAR domain. Residues 26–275 (KRTVKRIDDG…HVYRELEQAI (250 aa)) are a coiled coil. 2 disordered regions span residues 175–194 (MNSK…LQDK) and 309–386 (LPHT…DDSK). A Phosphothreonine modification is found at Thr184. Basic and acidic residues predominate over residues 314 to 324 (TKKEKQPKKAE). Residues 329–351 (TNATGAVESTSQAGDRGSVSSYD) show a composition bias toward polar residues. Residues Ser346, Ser348, Ser349, Ser361, and Ser365 each carry the phosphoserine modification. One can recognise an SH3 domain in the interval 385-444 (SKGVRVRALYDYDGQEQDELSFKAGDELTKLGEEDEQGWCRGRLDSGQLGLYPANYVEAI). Tyr394 carries the post-translational modification Phosphotyrosine. A phosphoserine mark is found at Ser405 and Ser430.

This sequence belongs to the PACSIN family. May form heterooligomers with other PACSINs. Interacts with MAPT. Interacts with TRPV4. Interacts (via SH3 domain) with SYNJ1 and WASL. Interacts with DNM2 and DNM3. Interacts with both COBL and DBNL. Identified in a complex composed of COBL, PACSIN1 and WASL. Interacts with EHD1 and EHD3. Homodimer. Interacts (via SH3 domain) with DNM1; the interaction is reduced by DNM1 phosphorylation. In terms of processing, phosphorylated by casein kinase 2 (CK2) and protein kinase C (PKC). As to expression, highly expressed in brain and, at much lower levels, in heart and pancreas.

The protein resides in the cytoplasm. Its subcellular location is the cell projection. The protein localises to the synapse. It localises to the synaptosome. It is found in the ruffle membrane. The protein resides in the membrane. Its subcellular location is the cytoplasmic vesicle membrane. The protein localises to the cytosol. It localises to the cell membrane. Functionally, plays a role in the reorganization of the microtubule cytoskeleton via its interaction with MAPT; this decreases microtubule stability and inhibits MAPT-induced microtubule polymerization. Plays a role in cellular transport processes by recruiting DNM1, DNM2 and DNM3 to membranes. Plays a role in the reorganization of the actin cytoskeleton and in neuron morphogenesis via its interaction with COBL and WASL, and by recruiting COBL to the cell cortex. Plays a role in the regulation of neurite formation, neurite branching and the regulation of neurite length. Required for normal synaptic vesicle endocytosis; this process retrieves previously released neurotransmitters to accommodate multiple cycles of neurotransmission. Required for normal excitatory and inhibitory synaptic transmission. Binds to membranes via its F-BAR domain and mediates membrane tubulation. This Homo sapiens (Human) protein is Protein kinase C and casein kinase substrate in neurons protein 1 (PACSIN1).